The sequence spans 1054 residues: MEEEKSFSAWSWSVEQCLKEYKTRLDKGLTSEDVQIRRQKYGFNELAKEKGKPLWHLVLEQFDDTLVKILLGAAFISFVLAFLGEEHGSGSGFEAFVEPFVIVLILILNAVVGVWQESNAEKALEALKEMQCESAKVLRDGNVLPNLPARELVPGDIVELNVGDKVPADMRVSGLKTSTLRVEQSSLTGEAMPVLKGANLVVMDDCELQGKENMVFAGTTVVNGSCVCIVTSIGMDTEIGKIQRQIHEASLEESETPLKKKLDEFGSRLTTAICIVCVLVWMINYKNFVSWDVVDGYKPVNIKFSFEKCTYYFKIAVALAVAAIPEGLPAVITTCLALGTRKMAQKNAIVRKLPSVETLGCTTVICSDKTGTLTTNQMSATEFFTLGGKTTTTRVFSVSGTTYDPKDGGIVDWGCNNMDANLQAVAEICSICNDAGVFYEGKLFRATGLPTEAALKVLVEKMGIPEKKNSENIEEVTNFSDNGSSVKLACCDWWNKRSKKVATLEFDRVRKSMSVIVSEPNGQNRLLVKGAAESILERSSFAQLADGSLVALDESSREVILKKHSEMTSKGLRCLGLAYKDELGEFSDYSSEEHPSHKKLLDPSSYSNIETNLIFVGVVGLRDPPREEVGRAIEDCRDAGIRVMVITGDNKSTAEAICCEIRLFSENEDLSQSSFTGKEFMSLPASRRSEILSKSGGKVFSRAEPRHKQEIVRMLKEMGEIVAMTGDGVNDAPALKLADIGIAMGITGTEVAKEASDMVLADDNFSTIVSAVAEGRSIYNNMKAFIRYMISSNVGEVISIFLTAALGIPECMIPVQLLWVNLVTDGPPATALGFNPADIDIMKKPPRKSDDCLIDSWVLIRYLVIGSYVGVATVGIFVLWYTQASFLGISLISDGHTLVSFTQLQNWSECSSWGTNFTATPYTVAGGLRTIAFENNPCDYFTLGKVKPMTLSLTVLVAIEMFNSLNALSEDNSLLTMPPWRNPWLLVAMTVSFALHCVILYVPFLANVFGIVPLSFREWFVVILVSFPVILIDEALKFIGRCRRTRIKKKIKTM.

At 1–53 (MEEEKSFSAWSWSVEQCLKEYKTRLDKGLTSEDVQIRRQKYGFNELAKEKGKP) the chain is on the cytoplasmic side. A helical membrane pass occupies residues 54–74 (LWHLVLEQFDDTLVKILLGAA). Residues 75–98 (FISFVLAFLGEEHGSGSGFEAFVE) lie on the Lumenal side of the membrane. A helical transmembrane segment spans residues 99–118 (PFVIVLILILNAVVGVWQES). Residues 119 to 262 (NAEKALEALK…ESETPLKKKL (144 aa)) lie on the Cytoplasmic side of the membrane. Residues 263 to 282 (DEFGSRLTTAICIVCVLVWM) traverse the membrane as a helical segment. At 283-312 (INYKNFVSWDVVDGYKPVNIKFSFEKCTYY) the chain is on the lumenal side. Residues 313–330 (FKIAVALAVAAIPEGLPA) form a helical membrane-spanning segment. Ca(2+) is bound by residues Val-321, Ala-322, Ile-324, and Glu-326. Residues 331-782 (VITTCLALGT…AEGRSIYNNM (452 aa)) lie on the Cytoplasmic side of the membrane. Catalysis depends on Asp-368, which acts as the 4-aspartylphosphate intermediate. 2 residues coordinate Mg(2+): Asp-727 and Asp-731. A helical membrane pass occupies residues 783-802 (KAFIRYMISSNVGEVISIFL). Ca(2+) contacts are provided by Asn-793 and Glu-796. Residues 803–812 (TAALGIPECM) are Lumenal-facing. A helical transmembrane segment spans residues 813-833 (IPVQLLWVNLVTDGPPATALG). 3 residues coordinate Ca(2+): Asn-821, Thr-824, and Asp-825. The Cytoplasmic portion of the chain corresponds to 834 to 853 (FNPADIDIMKKPPRKSDDCL). Residues 854-876 (IDSWVLIRYLVIGSYVGVATVGI) traverse the membrane as a helical segment. Residues 877–949 (FVLWYTQASF…YFTLGKVKPM (73 aa)) lie on the Lumenal side of the membrane. A helical transmembrane segment spans residues 950 to 969 (TLSLTVLVAIEMFNSLNALS). Glu-960 provides a ligand contact to Ca(2+). Residues 970–982 (EDNSLLTMPPWRN) lie on the Cytoplasmic side of the membrane. The chain crosses the membrane as a helical span at residues 983-1001 (PWLLVAMTVSFALHCVILY). The Lumenal segment spans residues 1002-1016 (VPFLANVFGIVPLSF). The helical transmembrane segment at 1017 to 1037 (REWFVVILVSFPVILIDEALK) threads the bilayer. The Cytoplasmic segment spans residues 1038-1054 (FIGRCRRTRIKKKIKTM).

Belongs to the cation transport ATPase (P-type) (TC 3.A.3) family. Type IIA subfamily.

It localises to the membrane. The enzyme catalyses Ca(2+)(in) + ATP + H2O = Ca(2+)(out) + ADP + phosphate + H(+). Its function is as follows. This magnesium-dependent enzyme catalyzes the hydrolysis of ATP coupled with the translocation of calcium from the cytosol to an endomembrane compartment. The protein is Calcium-transporting ATPase 2, endoplasmic reticulum-type (ECA2) of Arabidopsis thaliana (Mouse-ear cress).